We begin with the raw amino-acid sequence, 397 residues long: Homoserine O-acetyltransferase (397 aa).

The region spanning 58–368 (NAVLVLHALT…EAKWGHDAFL (311 aa)) is the AB hydrolase-1 domain. The Nucleophile role is filled by Ser-164. Arg-233 contributes to the substrate binding site. Active-site residues include Asp-331 and His-364. Position 365 (Asp-365) interacts with substrate.

Belongs to the AB hydrolase superfamily. MetX family. As to quaternary structure, homodimer.

It is found in the cytoplasm. The enzyme catalyses L-homoserine + acetyl-CoA = O-acetyl-L-homoserine + CoA. It participates in amino-acid biosynthesis; L-methionine biosynthesis via de novo pathway; O-acetyl-L-homoserine from L-homoserine: step 1/1. In terms of biological role, transfers an acetyl group from acetyl-CoA to L-homoserine, forming acetyl-L-homoserine. The polypeptide is Homoserine O-acetyltransferase (Solidesulfovibrio magneticus (strain ATCC 700980 / DSM 13731 / RS-1) (Desulfovibrio magneticus)).